A 62-amino-acid chain; its full sequence is Sperm protamine P1 (62 aa).

The disordered stretch occupies residues 1 to 62 (MARSRRHSRS…RCSRRRRRRC (62 aa)).

Belongs to the protamine P1 family. In terms of tissue distribution, testis.

The protein resides in the nucleus. The protein localises to the chromosome. Functionally, protamines substitute for histones in the chromatin of sperm during the haploid phase of spermatogenesis. They compact sperm DNA into a highly condensed, stable and inactive complex. The polypeptide is Sperm protamine P1 (PRM1) (Planigale ingrami (Long-tailed planigale)).